We begin with the raw amino-acid sequence, 455 residues long: Signal recognition particle 54 kDa protein (455 aa).

GTP-binding positions include 104 to 111 (GLYGHGKT), 184 to 188 (DTSGR), and 242 to 245 (TKMD).

Belongs to the GTP-binding SRP family. SRP54 subfamily. As to quaternary structure, part of the signal recognition particle protein translocation system, which is composed of SRP and FtsY. Archaeal SRP consists of a 7S RNA molecule of 300 nucleotides and two protein subunits: SRP54 and SRP19.

It localises to the cytoplasm. It carries out the reaction GTP + H2O = GDP + phosphate + H(+). Its function is as follows. Involved in targeting and insertion of nascent membrane proteins into the cytoplasmic membrane. Binds to the hydrophobic signal sequence of the ribosome-nascent chain (RNC) as it emerges from the ribosomes. The SRP-RNC complex is then targeted to the cytoplasmic membrane where it interacts with the SRP receptor FtsY. The polypeptide is Signal recognition particle 54 kDa protein (Thermoplasma volcanium (strain ATCC 51530 / DSM 4299 / JCM 9571 / NBRC 15438 / GSS1)).